Here is a 376-residue protein sequence, read N- to C-terminus: Putative F-box protein At1g30930 (376 aa).

Residues 1-44 (MKNSIPIDLIIEIVSRSTAKSVARCHCVSKQWRAIFRRKYFIEL) form the F-box domain.

The polypeptide is Putative F-box protein At1g30930 (Arabidopsis thaliana (Mouse-ear cress)).